The chain runs to 419 residues: Fumarylacetoacetase (419 aa).

Residue serine 2 is modified to N-acetylserine. Phosphoserine occurs at positions 84 and 92. Position 126 (aspartate 126) interacts with Ca(2+). Tyrosine 128 is a substrate binding site. Catalysis depends on histidine 133, which acts as the Proton acceptor. Arginine 142 is a substrate binding site. Ca(2+) contacts are provided by glutamate 199, glutamate 201, and aspartate 233. Aspartate 233 contacts Mg(2+). The substrate site is built by glutamine 240 and tyrosine 244. Residues lysine 253 and threonine 257 each contribute to the Mg(2+) site. Phosphoserine is present on serine 309. Residue threonine 350 coordinates substrate. The residue at position 417 (serine 417) is a Phosphoserine.

The protein belongs to the FAH family. Homodimer. It depends on Ca(2+) as a cofactor. Mg(2+) is required as a cofactor. In terms of tissue distribution, mainly in liver and kidney.

It catalyses the reaction 4-fumarylacetoacetate + H2O = acetoacetate + fumarate + H(+). It functions in the pathway amino-acid degradation; L-phenylalanine degradation; acetoacetate and fumarate from L-phenylalanine: step 6/6. In Rattus norvegicus (Rat), this protein is Fumarylacetoacetase (Fah).